We begin with the raw amino-acid sequence, 64 residues long: MADESKFEQAKGNVKETIGNVTDNKNLENEGKEDKASGKAKEFVENAKEKATDFIDKVKGNKGE.

The segment at Met-1–Ala-40 is disordered. A compositionally biased stretch (basic and acidic residues) spans Lys-25–Ala-40.

It belongs to the UPF0337 (CsbD) family.

In Staphylococcus aureus (strain bovine RF122 / ET3-1), this protein is UPF0337 protein SAB0772.